We begin with the raw amino-acid sequence, 316 residues long: Phospho-N-acetylmuramoyl-pentapeptide-transferase (316 aa).

The next 10 helical transmembrane spans lie at 5–25 (IIFA…FFIP), 52–72 (TMGG…FSPW), 76–96 (LFIL…DDFL), 116–136 (FLLA…EIIV), 145–165 (LANF…NSVN), 172–192 (GLAA…ALFL), 195–212 (VTYG…LGFL), 221–241 (VFMG…VALL), 244–264 (LPLI…SVIL), and 296–316 (VVYS…YSLS).

Belongs to the glycosyltransferase 4 family. MraY subfamily. Mg(2+) serves as cofactor.

It localises to the cell membrane. It catalyses the reaction UDP-N-acetyl-alpha-D-muramoyl-L-alanyl-gamma-D-glutamyl-meso-2,6-diaminopimeloyl-D-alanyl-D-alanine + di-trans,octa-cis-undecaprenyl phosphate = di-trans,octa-cis-undecaprenyl diphospho-N-acetyl-alpha-D-muramoyl-L-alanyl-D-glutamyl-meso-2,6-diaminopimeloyl-D-alanyl-D-alanine + UMP. It functions in the pathway cell wall biogenesis; peptidoglycan biosynthesis. Catalyzes the initial step of the lipid cycle reactions in the biosynthesis of the cell wall peptidoglycan: transfers peptidoglycan precursor phospho-MurNAc-pentapeptide from UDP-MurNAc-pentapeptide onto the lipid carrier undecaprenyl phosphate, yielding undecaprenyl-pyrophosphoryl-MurNAc-pentapeptide, known as lipid I. This chain is Phospho-N-acetylmuramoyl-pentapeptide-transferase, found in Caldanaerobacter subterraneus subsp. tengcongensis (strain DSM 15242 / JCM 11007 / NBRC 100824 / MB4) (Thermoanaerobacter tengcongensis).